The primary structure comprises 272 residues: Indole-3-glycerol phosphate synthase (272 aa).

Belongs to the TrpC family.

The enzyme catalyses 1-(2-carboxyphenylamino)-1-deoxy-D-ribulose 5-phosphate + H(+) = (1S,2R)-1-C-(indol-3-yl)glycerol 3-phosphate + CO2 + H2O. It participates in amino-acid biosynthesis; L-tryptophan biosynthesis; L-tryptophan from chorismate: step 4/5. This Paenarthrobacter aurescens (strain TC1) protein is Indole-3-glycerol phosphate synthase.